A 215-amino-acid polypeptide reads, in one-letter code: uncharacterized protein (215 aa).

The first 17 residues, 1–17 (MKKVLASATILSLMLVG), serve as a signal peptide directing secretion. A disordered region spans residues 17–110 (GCSNGGNDES…NKQQQSVQDN (94 aa)). Cys18 carries the N-palmitoyl cysteine lipid modification. The S-diacylglycerol cysteine moiety is linked to residue Cys18. The segment covering 25–62 (ESSHKDDSSKTEQKDKSSSQHDSKKDSKRNDTNNKQDN) has biased composition (basic and acidic residues). Composition is skewed to low complexity over residues 63–76 (QENN…NNQN) and 91–110 (NSNG…VQDN).

Its subcellular location is the cell membrane. This is an uncharacterized protein from Staphylococcus epidermidis (strain ATCC 35984 / DSM 28319 / BCRC 17069 / CCUG 31568 / BM 3577 / RP62A).